The sequence spans 309 residues: Porphobilinogen deaminase (309 aa).

An S-(dipyrrolylmethanemethyl)cysteine modification is found at Cys-240.

The protein belongs to the HMBS family. Monomer. Dipyrromethane serves as cofactor.

It carries out the reaction 4 porphobilinogen + H2O = hydroxymethylbilane + 4 NH4(+). Its pathway is porphyrin-containing compound metabolism; protoporphyrin-IX biosynthesis; coproporphyrinogen-III from 5-aminolevulinate: step 2/4. In terms of biological role, tetrapolymerization of the monopyrrole PBG into the hydroxymethylbilane pre-uroporphyrinogen in several discrete steps. The chain is Porphobilinogen deaminase from Brevibacillus brevis (strain 47 / JCM 6285 / NBRC 100599).